Reading from the N-terminus, the 100-residue chain is Urease subunit gamma (100 aa).

This sequence belongs to the urease gamma subunit family. In terms of assembly, heterotrimer of UreA (gamma), UreB (beta) and UreC (alpha) subunits. Three heterotrimers associate to form the active enzyme.

It localises to the cytoplasm. The catalysed reaction is urea + 2 H2O + H(+) = hydrogencarbonate + 2 NH4(+). It participates in nitrogen metabolism; urea degradation; CO(2) and NH(3) from urea (urease route): step 1/1. This chain is Urease subunit gamma, found in Variovorax paradoxus (strain S110).